Reading from the N-terminus, the 177-residue chain is MKGFVVISRFILTLFILITPGLAGVVNYAENSEWNVPKYGNVLDSNCQGQKPVTFFGSVTEHVSNSWWIKLYDYMMTFISGEKLCMQNVAYEFEDISLCMDVVGSKCIPTLQSTDIEKVVNSTSAYLENSESDLTLGCFQIQRFQEESTLYIRALKSSEPVSCDTVRCIHFNHIPYV.

Residues 1–23 (MKGFVVISRFILTLFILITPGLA) form the signal peptide. Asparagine 121 is a glycosylation site (N-linked (GlcNAc...) asparagine).

It is found in the endoplasmic reticulum. The protein localises to the golgi apparatus. Functionally, has a role in meiosis. The chain is Meiotically up-regulated gene 121 protein (mug121) from Schizosaccharomyces pombe (strain 972 / ATCC 24843) (Fission yeast).